Consider the following 306-residue polypeptide: Beta-lactamase (306 aa).

The first 36 residues, 1–36, serve as a signal peptide directing secretion; sequence MKLKTKASIKFGICVGLLCLSITGFTPFFNSTHAEA. S89 functions as the Acyl-ester intermediate in the catalytic mechanism. Position 251–253 (251–253) interacts with substrate; the sequence is KSG.

Belongs to the class-A beta-lactamase family.

Its subcellular location is the secreted. The enzyme catalyses a beta-lactam + H2O = a substituted beta-amino acid. In terms of biological role, this protein is a beta-lactamase with a substrate specificity for penicillins. The polypeptide is Beta-lactamase (penP) (Bacillus subtilis (strain 168)).